The chain runs to 374 residues: All-trans-retinol dehydrogenase [NAD(+)] ADH7 (374 aa).

Position 1 is an N-acetylmethionine (Met-1). Zn(2+) is bound by residues Cys-47, His-68, Cys-98, Cys-101, Cys-104, Cys-112, and Cys-174. NAD(+) is bound by residues 199-204 (GLGGVG), Asp-223, Lys-228, 292-294 (VGA), and Arg-369.

The protein belongs to the zinc-containing alcohol dehydrogenase family. Class-IV subfamily. Homodimer. Zn(2+) serves as cofactor. Preferentially expressed in stomach.

It is found in the cytoplasm. It catalyses the reaction a primary alcohol + NAD(+) = an aldehyde + NADH + H(+). The catalysed reaction is 10-hydroxydecanoate + NAD(+) = 10-oxodecanoate + NADH + H(+). The enzyme catalyses all-trans-retinol + NAD(+) = all-trans-retinal + NADH + H(+). It carries out the reaction 9-cis-retinol + NAD(+) = 9-cis-retinal + NADH + H(+). It catalyses the reaction all-trans-3,4-didehydroretinol + NAD(+) = all-trans-3,4-didehydroretinal + NADH + H(+). The catalysed reaction is all-trans-4-hydroxyretinol + NAD(+) = all-trans-4-hydroxyretinal + NADH + H(+). The enzyme catalyses all-trans-4-oxoretinol + NAD(+) = all-trans-4-oxoretinal + NADH + H(+). It carries out the reaction 12-hydroxydodecanoate + NAD(+) = 12-oxododecanoate + NADH + H(+). It catalyses the reaction 16-hydroxyhexadecanoate + NAD(+) = 16-oxohexadecanoate + NADH + H(+). The catalysed reaction is hexan-1-ol + NAD(+) = hexanal + NADH + H(+). The enzyme catalyses (E)-hex-2-en-1-ol + NAD(+) = (E)-hex-2-enal + NADH + H(+). It carries out the reaction (E)-4-hydroxynon-2-en-1-ol + NAD(+) = (E)-4-hydroxynon-2-enal + NADH + H(+). Retinol oxidation is inhibited by the detergent Tween 80. Ethanol inhibits both all-trans-retinol and 9-cis-retinol oxidation. 13-cis-retinol is an effective competitive inhibitor of the 9-cis-retinol oxidation. All-trans-retinoic acid is a powerful inhibitor of all-trans-retinol oxidation. 13-cis-retinoic acid is a powerful inhibitor of all-trans-retinol oxidation. Cimetidine and ranitidine inhibited ethanol oxidation. In terms of biological role, catalyzes the NAD-dependent oxidation of all-trans-retinol, alcohol, aldehyde and omega-hydroxy fatty acids and their derivatives. Oxidizes preferentially all trans-retinol, all-trans-4-hydroxyretinol, 9-cis-retinol, 2-hexenol, and long chain omega-hydroxy fatty acids such as juniperic acid. In vitro can also catalyze the NADH-dependent reduction of all-trans-retinal and aldehydes and their derivatives. Reduces preferentially all trans-retinal, all-trans-4-oxoretinal and hexanal. Catalyzes in the oxidative direction with higher efficiency. Therefore may participate in retinoid metabolism, fatty acid omega-oxidation, and elimination of cytotoxic aldehydes produced by lipid peroxidation. This Rattus norvegicus (Rat) protein is All-trans-retinol dehydrogenase [NAD(+)] ADH7 (Adh7).